The chain runs to 892 residues: Gamma-tubulin small complex component GCP3 (892 aa).

Belongs to the TUBGCP family. Component of the gamma-tubulin small complex (gamma-TuSC) composed of tubulin gamma chain, gamma-tubulin complex protein 2 (GCP2) and gamma-tubulin complex protein 3 (GCP3). Interacts with tubulin gamma chain.

It localises to the cytoplasm. The protein localises to the cytoskeleton. It is found in the flagellum axoneme. Its subcellular location is the flagellum basal body. Its function is as follows. Component of the gamma-tubulin small complex (gamma-TuSC) involved in microtubule (MT) nucleation for the formation of median bodies and in the biogenesis of flagella. Gamma-TuSC may be required for the correct positioning of EB1 within the trophozoites. The chain is Gamma-tubulin small complex component GCP3 from Giardia intestinalis (strain ATCC 50803 / WB clone C6) (Giardia lamblia).